We begin with the raw amino-acid sequence, 319 residues long: N-acetyllactosaminide alpha-1,3-galactosyltransferase-like 1 (319 aa).

Residues 1 to 6 (MQYKKE) are Cytoplasmic-facing. Residues 7–26 (ALLLMLFAVLLALTQRFSYS) form a helical; Signal-anchor for type II membrane protein membrane-spanning segment. The Lumenal segment spans residues 27–319 (RTKDHLQKMY…IKHIKIAWKP (293 aa)). N-linked (GlcNAc...) asparagine glycosylation is found at asparagine 89 and asparagine 101. Residues 97–102 (FATGNF), 188–190 (AVN), and 210–213 (HAWW) contribute to the substrate site. Glutamate 278 serves as the catalytic Nucleophile.

Belongs to the glycosyltransferase 6 family. Mn(2+) is required as a cofactor.

It localises to the golgi apparatus. The protein resides in the golgi stack membrane. The catalysed reaction is a beta-D-galactosyl-(1-&gt;4)-N-acetyl-beta-D-glucosaminyl derivative + UDP-alpha-D-galactose = an alpha-D-galactosyl-(1-&gt;3)-beta-D-galactosyl-(1-&gt;4)-N-acetyl-beta-D-glucosaminyl derivative + UDP + H(+). The protein operates within protein modification; protein glycosylation. Synthesizes the galactose-alpha(1,3)-galactose group by catalyzing the transfer of a galactose residue, with an alpha-1,3 linkage, on terminal lactosaminide (Gal-beta-1,4-GlcNAc-R) disaccharide borne by a glycoprotein or a glycolipid. In Mus musculus (Mouse), this protein is N-acetyllactosaminide alpha-1,3-galactosyltransferase-like 1 (Ggta1l1).